The chain runs to 227 residues: Uracil-DNA glycosylase (227 aa).

Asp68 functions as the Proton acceptor in the catalytic mechanism.

This sequence belongs to the uracil-DNA glycosylase (UDG) superfamily. UNG family.

It is found in the cytoplasm. It carries out the reaction Hydrolyzes single-stranded DNA or mismatched double-stranded DNA and polynucleotides, releasing free uracil.. Its function is as follows. Excises uracil residues from the DNA which can arise as a result of misincorporation of dUMP residues by DNA polymerase or due to deamination of cytosine. This chain is Uracil-DNA glycosylase, found in Mycolicibacterium smegmatis (strain ATCC 700084 / mc(2)155) (Mycobacterium smegmatis).